The following is a 407-amino-acid chain: Chorismate synthase (407 aa).

NADP(+) is bound by residues Arg-40 and Arg-46. FMN contacts are provided by residues 140 to 142 (RSS), 261 to 262 (QA), Gly-305, 320 to 324 (KPIST), and Arg-346.

This sequence belongs to the chorismate synthase family. As to quaternary structure, homotetramer. The cofactor is FMNH2.

It carries out the reaction 5-O-(1-carboxyvinyl)-3-phosphoshikimate = chorismate + phosphate. It functions in the pathway metabolic intermediate biosynthesis; chorismate biosynthesis; chorismate from D-erythrose 4-phosphate and phosphoenolpyruvate: step 7/7. Functionally, catalyzes the anti-1,4-elimination of the C-3 phosphate and the C-6 proR hydrogen from 5-enolpyruvylshikimate-3-phosphate (EPSP) to yield chorismate, which is the branch point compound that serves as the starting substrate for the three terminal pathways of aromatic amino acid biosynthesis. This reaction introduces a second double bond into the aromatic ring system. In Corynebacterium glutamicum (strain R), this protein is Chorismate synthase.